The sequence spans 273 residues: Probable ribosomal RNA small subunit methyltransferase A (273 aa).

N26, L28, G53, E74, D98, and N113 together coordinate S-adenosyl-L-methionine.

Belongs to the class I-like SAM-binding methyltransferase superfamily. rRNA adenine N(6)-methyltransferase family. RsmA subfamily.

It localises to the cytoplasm. Specifically dimethylates two adjacent adenosines in the loop of a conserved hairpin near the 3'-end of 16S rRNA in the 30S particle. May play a critical role in biogenesis of 30S subunits. The protein is Probable ribosomal RNA small subunit methyltransferase A of Methanothermobacter thermautotrophicus (strain ATCC 29096 / DSM 1053 / JCM 10044 / NBRC 100330 / Delta H) (Methanobacterium thermoautotrophicum).